Here is a 172-residue protein sequence, read N- to C-terminus: Lipopolysaccharide export system protein LptA (172 aa).

The N-terminal stretch at 1–23 (MKLVSNKILFLATMVLASSSAFA) is a signal peptide.

The protein belongs to the LptA family. In terms of assembly, component of the lipopolysaccharide transport and assembly complex.

It localises to the periplasm. Its function is as follows. Involved in the assembly of lipopolysaccharide (LPS). Required for the translocation of LPS from the inner membrane to the outer membrane. May form a bridge between the inner membrane and the outer membrane, via interactions with LptC and LptD, thereby facilitating LPS transfer across the periplasm. The sequence is that of Lipopolysaccharide export system protein LptA from Haemophilus influenzae (strain ATCC 51907 / DSM 11121 / KW20 / Rd).